The chain runs to 281 residues: Probable superoxide dismutase [Fe] (281 aa).

4 residues coordinate Fe cation: His104, His152, Asp236, and His240.

It belongs to the iron/manganese superoxide dismutase family. Fe cation serves as cofactor.

The catalysed reaction is 2 superoxide + 2 H(+) = H2O2 + O2. Functionally, destroys superoxide anion radicals which are normally produced within the cells and which are toxic to biological systems. The polypeptide is Probable superoxide dismutase [Fe] (sodF) (Bacillus subtilis (strain 168)).